The primary structure comprises 309 residues: Cutinase (309 aa).

Positions 1-47 are cleaved as a signal peptide; it reads MSALTSQPTSSGSSEKIPRLRGWRAKAAGVVLAALALTTGVAAPAPA. The active-site Nucleophile is Ser178. Residues Asp224 and His256 each act as charge relay system in the active site. Cys289 and Cys305 are disulfide-bonded.

It belongs to the AB hydrolase superfamily.

It localises to the secreted. The catalysed reaction is a carboxylic ester + H2O = an alcohol + a carboxylate + H(+). The enzyme catalyses a triacylglycerol + H2O = a diacylglycerol + a fatty acid + H(+). It catalyses the reaction 1,2,3-tri-(9Z-octadecenoyl)-glycerol + H2O = di-(9Z)-octadecenoylglycerol + (9Z)-octadecenoate + H(+). It carries out the reaction (6-hydroxyhexanoyl)(n) + H2O = (6-hydroxyhexanoyl)(n-1) + 6-hydroxyhexanoate + H(+). The catalysed reaction is cutin + H2O = cutin monomers.. Its activity is regulated as follows. No effect on activity by SDS or chelating agents ethylenediaminetetraacetic acid (EDTA) or sodium citrate. No effect on activity by metal ions Ag(+), Ba(2+), Ca(2+), Co(2+), Cu(2+), Mn(2+), Ni(2+), Pb(2+) or Zn(2+). Activated by 1 mM digitonin and sodium deoxycholate, and reducing agents 1 mM 1,4-dithiothreitol, beta-mercaptoethanol and ascorbic acid. Activated by benzene, n-hexane, p-xylene and toluene. Activated by Fe(3+). Inhibited slightly by 1 mM of different chain length fatty acids, and only marginally by 6.0 M urea. Inhibited strongly with chemical modification by reagents phenyl methyl sulfonylfluorid (PMSF), 1-ethyl-3-(3-dimethylaminopropyl) carbodiimide (EDAC), diethylpyrocarbonate (DEPC) and N-bromosuccinimide (NBS). Inhibited by pyridine, DMSO, t-butanol and dodecane. Inhibited by Li(+), Hg(2+) and Mg(2+). No inhibition with chemical modification by reagents N-acetylimidazole (NAI), citraconic anhydride (CA), iodoacetate (IA) and phenylglyoxal (PG). Functionally, catalyzes the hydrolysis of cutin, a polyester that forms the structure of plant cuticle. Shows esterase activity towards p-nitrophenol-linked aliphatic esters (pNP-aliphatic esters). Has a preference for medium chain length (C-4 to C-12) fatty acid esters. Active with p-nitrophenyl palmitate (p-NPP) as substrate. Hydrolyzes triacylglycerol substrates non-specifically with a preference for long, unsaturated fatty acyl chains with the highest activity for triolein. Substrates with cis-9 unsaturation are preferred over the saturated triacylglycerols. Hydrolyzes a wide range of natural oils, especially olive oil, with relatively high activity. Capable of catalyzing synthesis of the flavor ester isoamyl acetate by esterification of isoamyl alcohol using acetic acid as an acyl donor. Degrades synthetic aliphatic polyesters, namely poly(1,4-butylene succinate) extended with 1,6-diisocyanatohexane (PBSc-D) and poly(epsilon-caprolactone) (PCL) plastics. Does not degrade poly(lactic acid) (PLA) nor aromatic poly(ethylene terephthalate) (PET), the most abundant polyester plastic in the world. The chain is Cutinase from Amycolatopsis mediterranei (strain S699) (Nocardia mediterranei).